Consider the following 108-residue polypeptide: Thiosulfate sulfurtransferase GlpE (108 aa).

One can recognise a Rhodanese domain in the interval 18–106 (ENEGATLADI…WERSGLPIET (89 aa)). The active-site Cysteine persulfide intermediate is cysteine 66.

It belongs to the GlpE family.

The protein resides in the cytoplasm. It catalyses the reaction thiosulfate + hydrogen cyanide = thiocyanate + sulfite + 2 H(+). The enzyme catalyses thiosulfate + [thioredoxin]-dithiol = [thioredoxin]-disulfide + hydrogen sulfide + sulfite + 2 H(+). Functionally, transferase that catalyzes the transfer of sulfur from thiosulfate to thiophilic acceptors such as cyanide or dithiols. May function in a CysM-independent thiosulfate assimilation pathway by catalyzing the conversion of thiosulfate to sulfite, which can then be used for L-cysteine biosynthesis. The sequence is that of Thiosulfate sulfurtransferase GlpE from Actinobacillus pleuropneumoniae serotype 5b (strain L20).